The primary structure comprises 710 residues: MKLDRKKKRLLLKTIFSIVILILPLTFLHPTNSTVSSQNQVPIQIIYNYNVSGGVIYTAPLNIPSGFYNYYMINQYGTLLYSYLFSTNPAFVVWYEPQPTTETYYFVYGQSVTSQLVSTDVFSLYTQFYIYNSSMWNISNGVVSGGVLTLNGKNSILTENYTAPRYTSALWLYQILSPQSVSPTQIVYTSPIPPGSLIIVHVLTYTGSYQVPYPAIAQYNTPYIIAESYTSQYLTANSTHYYYYYNSLKYVGSMQQSLPFITTVSTNGLIFYSSAKNSQVLLPGATLPATSYTTNSTFIAGQLVGTGIDSYSINPSFVWCPEWIVNGSIQLLNGCKVPITGHYQLDKSTYAVILNSVFNSSDDELIAPVNSIVTVTYSNGTSYSFTVTGSSIYSGLPVPLVVVKFYGVGVTGIHISTNAFGINQQYSALIGFTDLLHTYGVLIQNGEAYSYIAGTKGPALGNVTFPMVVAVGEFAVGNTYYVFGEIVTTSRVFPFIQQSSYAIQPTIAYVNYNGTIPLVIQSVAETLSTGTYYELSGIAAMNVGQPTPINSVILSVVSQPGLEIVGSNGNVYSTIVQNTSAPNLVLVGFQGYSITLVYTNVQQNLVVTTNNFPVNLPSDMPLLVAIDQASRSITITVGQTQTQSIFMKTIPVNTTTPAVSLPIPNYPGNIIVDPESELTVISYYIIGAVAIVSMAYGTKIWIGVFIFAIS.

Residues 1-33 (MKLDRKKKRLLLKTIFSIVILILPLTFLHPTNS) form the signal peptide. The next 3 helical transmembrane spans lie at 41-61 (VPIQ…TAPL), 76-95 (YGTL…VVWY), and 689-709 (VAIV…IFAI).

The protein localises to the host membrane. This chain is Putative transmembrane protein ORF710, found in Acidianus convivator (ATV).